We begin with the raw amino-acid sequence, 398 residues long: S-adenosylmethionine synthase (398 aa).

Residue 136–141 participates in ATP binding; that stretch reads GTGSSD.

It belongs to the AdoMet synthase 2 family. Mg(2+) is required as a cofactor.

It carries out the reaction L-methionine + ATP + H2O = S-adenosyl-L-methionine + phosphate + diphosphate. The protein operates within amino-acid biosynthesis; S-adenosyl-L-methionine biosynthesis; S-adenosyl-L-methionine from L-methionine: step 1/1. Functionally, catalyzes the formation of S-adenosylmethionine from methionine and ATP. The chain is S-adenosylmethionine synthase from Methanosarcina acetivorans (strain ATCC 35395 / DSM 2834 / JCM 12185 / C2A).